A 499-amino-acid polypeptide reads, in one-letter code: Anaerobic magnesium-protoporphyrin IX monomethyl ester cyclase (499 aa).

Residues 9–145 (PHPAIGSRIP…AALENHNDLN (137 aa)) form the B12-binding domain. In terms of domain architecture, Radical SAM core spans 188–420 (YGGKQAVVIQ…PPWRIFLWVK (233 aa)). [4Fe-4S] cluster is bound by residues Cys202, Cys206, and Cys209.

Belongs to the BchE family. Requires [4Fe-4S] cluster as cofactor. It depends on adenosylcob(III)alamin as a cofactor.

It carries out the reaction Mg-protoporphyrin IX 13-monomethyl ester + 3 S-adenosyl-L-methionine + H2O = 3,8-divinyl protochlorophyllide a + 3 5'-deoxyadenosine + 3 L-methionine + 4 H(+). The protein operates within porphyrin-containing compound metabolism; bacteriochlorophyll biosynthesis (light-independent). Involved in the tetrapyrrole biosynthetic pathways leading to chlorophyll and bacteriochlorophyll (BChl). Catalyzes the anaerobic formation of the isocyclic ring (E-ring) in Mg-protoporphyrin monomethyl ester (MPE) to yield protochlorophyllide a (PChlide a) via a six-electron oxidation and the formation of an oxo group at position C13 using oxygen from a water molecule. This Synechocystis sp. (strain ATCC 27184 / PCC 6803 / Kazusa) protein is Anaerobic magnesium-protoporphyrin IX monomethyl ester cyclase.